The following is a 342-amino-acid chain: Small GTPase LIP1 (342 aa).

Residues 12-285 (KEQILAPLCG…FHGDPYKYNN (274 aa)) are small GTPase-like. GTP is bound by residues 29-36 (GDSGVGKT), 90-94 (DVSGH), and 160-163 (NKAD). 2 disordered regions span residues 274–313 (TSFH…TPDN) and 323–342 (SVQE…DINV). Over residues 323-333 (SVQETTNNGSA) the composition is skewed to polar residues.

This sequence belongs to the small GTPase superfamily.

The protein resides in the nucleus. The protein localises to the cytoplasm. Functional small GTPase that acts as a negative factor controlling the light-dependent period shortening of circadian rhythms and light-induced phase resetting during the subjective night. May protect the clock from excessive or mistimed light. Suppresses red and blue light-mediated photomorphogenesis and is required for light-controlled inhibition of endoreplication and tolerance to salt stress. The entrainment of the circadian clock is independent from the other pleiotropic effects. Could be a regulator of seedling establishment. This chain is Small GTPase LIP1, found in Arabidopsis thaliana (Mouse-ear cress).